A 223-amino-acid chain; its full sequence is NLP effector protein 2 (223 aa).

A Conserved undecapeptide motif motif is present at residues 90–100; that stretch reads AIMYSWYFPKD. Positions 107–113 match the Conserved p motif motif; sequence GHRHDWE.

The protein belongs to the Necrosis inducing protein (NPP1) family.

The protein localises to the secreted. It localises to the host cytoplasm. Probable secreted effector that may act as a pathogen-associated molecular pattern (PAMP) recognized by the plant immune system. Seems not to induce necrosis, neither in several susceptible or resistant Vitis species nor in the dicot model plant Nicotiana benthamiana. The polypeptide is NLP effector protein 2 (Plasmopara viticola (Downy mildew of grapevine)).